Reading from the N-terminus, the 253-residue chain is Endonuclease NucS (253 aa).

The disordered stretch occupies residues 63–91; that stretch reads IDDPDTDFTDGSSVGNSEEQGTDGSAHTA. Polar residues predominate over residues 71–87; the sequence is TDGSSVGNSEEQGTDGS.

This sequence belongs to the NucS endonuclease family.

Its subcellular location is the cytoplasm. Cleaves both 3' and 5' ssDNA extremities of branched DNA structures. This Corynebacterium kroppenstedtii (strain DSM 44385 / JCM 11950 / CIP 105744 / CCUG 35717) protein is Endonuclease NucS.